We begin with the raw amino-acid sequence, 432 residues long: Trigger factor (432 aa).

Positions 161-246 (EDRVTIDFTG…LKKVEERELP (86 aa)) constitute a PPIase FKBP-type domain.

It belongs to the FKBP-type PPIase family. Tig subfamily.

It localises to the cytoplasm. It carries out the reaction [protein]-peptidylproline (omega=180) = [protein]-peptidylproline (omega=0). In terms of biological role, involved in protein export. Acts as a chaperone by maintaining the newly synthesized protein in an open conformation. Functions as a peptidyl-prolyl cis-trans isomerase. This is Trigger factor from Salmonella typhi.